A 382-amino-acid chain; its full sequence is Galactokinase (382 aa).

34–37 (EHTD) serves as a coordination point for substrate. 124–130 (GAGLSSS) is an ATP binding site. Mg(2+)-binding residues include Ser-130 and Glu-162. Residue Asp-174 is the Proton acceptor of the active site. Substrate is bound at residue Tyr-223.

It belongs to the GHMP kinase family. GalK subfamily.

The protein resides in the cytoplasm. The catalysed reaction is alpha-D-galactose + ATP = alpha-D-galactose 1-phosphate + ADP + H(+). It participates in carbohydrate metabolism; galactose metabolism. Its function is as follows. Catalyzes the transfer of the gamma-phosphate of ATP to D-galactose to form alpha-D-galactose-1-phosphate (Gal-1-P). The chain is Galactokinase from Escherichia coli O17:K52:H18 (strain UMN026 / ExPEC).